The chain runs to 310 residues: p-hydroxybenzoic acid efflux pump subunit AaeA (310 aa).

A helical membrane pass occupies residues A12 to Y32.

Belongs to the membrane fusion protein (MFP) (TC 8.A.1) family.

Its subcellular location is the cell inner membrane. Its function is as follows. Forms an efflux pump with AaeB. This chain is p-hydroxybenzoic acid efflux pump subunit AaeA, found in Shigella flexneri.